Here is a 253-residue protein sequence, read N- to C-terminus: Phosphate import ATP-binding protein PstB 1 (253 aa).

The ABC transporter domain occupies 7–248; that stretch reads LQIRDLSVYY…PKRKETEDYI (242 aa). An ATP-binding site is contributed by 39–46; it reads GPSGSGKS.

Belongs to the ABC transporter superfamily. Phosphate importer (TC 3.A.1.7) family. In terms of assembly, the complex is composed of two ATP-binding proteins (PstB), two transmembrane proteins (PstC and PstA) and a solute-binding protein (PstS).

Its subcellular location is the cell membrane. The enzyme catalyses phosphate(out) + ATP + H2O = ADP + 2 phosphate(in) + H(+). Functionally, part of the ABC transporter complex PstSACB involved in phosphate import. Responsible for energy coupling to the transport system. The protein is Phosphate import ATP-binding protein PstB 1 of Streptococcus pyogenes serotype M12 (strain MGAS9429).